Here is a 327-residue protein sequence, read N- to C-terminus: Complex I intermediate-associated protein 30, mitochondrial (327 aa).

A mitochondrion-targeting transit peptide spans 1–24; sequence MALVHKLLRGTYILRKFSKPASAL. The disordered stretch occupies residues 42–63; it reads PVASPGKASSQRKTEGDLQGDH. The span at 53 to 63 shows a compositional bias: basic and acidic residues; that stretch reads RKTEGDLQGDH. Ser-318 bears the Phosphoserine mark.

Belongs to the CIA30 family. Part of the mitochondrial complex I assembly/MCIA complex that comprises at least the core subunits TMEM126B, NDUFAF1, ECSIT and ACAD9 and complement subunits such as COA1 and TMEM186. Interacts with ECSIT. Interacts with ACAD9. At early stages of complex I assembly, it is found in intermediate subcomplexes that contain different subunits including NDUFB6, NDUFA6, NDUFA9, NDUFS3, NDUFS7, ND1, ND2 and ND3. Interacts with TMEM70 and TMEM242.

It localises to the mitochondrion. Its subcellular location is the mitochondrion matrix. In terms of biological role, as part of the MCIA complex, involved in the assembly of the mitochondrial complex I. The chain is Complex I intermediate-associated protein 30, mitochondrial from Pongo pygmaeus (Bornean orangutan).